The primary structure comprises 183 residues: Translation initiation factor IF-3 (183 aa).

It belongs to the IF-3 family. As to quaternary structure, monomer.

Its subcellular location is the cytoplasm. Its function is as follows. IF-3 binds to the 30S ribosomal subunit and shifts the equilibrium between 70S ribosomes and their 50S and 30S subunits in favor of the free subunits, thus enhancing the availability of 30S subunits on which protein synthesis initiation begins. The polypeptide is Translation initiation factor IF-3 (Yersinia pseudotuberculosis serotype O:1b (strain IP 31758)).